The following is a 319-amino-acid chain: Vomeronasal type-1 receptor 96 (319 aa).

The Extracellular portion of the chain corresponds to 1 to 19; the sequence is MNKVNILPSDTNIKITLFS. Residues 20–40 form a helical membrane-spanning segment; that stretch reads EVSVGISANSVLFFAHLCMFF. Over 41 to 49 the chain is Cytoplasmic; that stretch reads EENRSKPID. Residues 50–70 traverse the membrane as a helical segment; the sequence is LCIAFLSLTQLMLLVTMGLIA. Over 71 to 93 the chain is Extracellular; it reads ADMFMSQGIWDSTTCRSIIYFHR. C85 and C172 form a disulfide bridge. Residues 94 to 114 traverse the membrane as a helical segment; it reads LLRGFNLCAACLLHILWTFTL. The Cytoplasmic portion of the chain corresponds to 115–134; it reads SPRSSCLTKFKHKSPHHISC. A helical membrane pass occupies residues 135-155; that stretch reads AFFSLCVLYMLFSSHLFVLII. Topologically, residues 156 to 193 are extracellular; that stretch reads ATSNLTSDHFMYVTQSCSILPMSYSRTTMFSLVMVTRE. Residue N159 is glycosylated (N-linked (GlcNAc...) asparagine). A helical membrane pass occupies residues 194–214; it reads AFLISLMALFSGYMVTLLWRH. Topologically, residues 215 to 238 are cytoplasmic; that stretch reads KKQVQHLHSTSLSSKSSPQQRATR. A helical transmembrane segment spans residues 239–259; the sequence is TILLLMSFFVVLYILDIVIFQ. Residues 260 to 269 lie on the Extracellular side of the membrane; it reads SRTKFKDGSM. The helical transmembrane segment at 270–290 threads the bilayer; that stretch reads FYSLHIIVSHSYATISPFVFI. Topologically, residues 291–319 are cytoplasmic; that stretch reads FSDKRIIKFLGSMSGRIINICLFSDGYGP.

Belongs to the G-protein coupled receptor 1 family.

It localises to the cell membrane. Putative pheromone receptor implicated in the regulation of social as well as reproductive behavior. This is Vomeronasal type-1 receptor 96 (Vom1r96) from Rattus norvegicus (Rat).